Here is a 140-residue protein sequence, read N- to C-terminus: MQERTLSILKPDVVERGIIGNVISYIEAAGLKVVAQRMCRLTVSQAEEFYDVHRDRPFFPELVKFMTSGPVVVQVLEGESAIAVYRDVMGATNPKEAAKGTIRADFAESIDANCVHGSDNADNAKREIMFFFGECEIFKR.

Positions 10, 58, 86, 92, 103, and 113 each coordinate ATP. H116 serves as the catalytic Pros-phosphohistidine intermediate.

The protein belongs to the NDK family. As to quaternary structure, homotetramer. It depends on Mg(2+) as a cofactor.

The protein resides in the cytoplasm. The catalysed reaction is a 2'-deoxyribonucleoside 5'-diphosphate + ATP = a 2'-deoxyribonucleoside 5'-triphosphate + ADP. The enzyme catalyses a ribonucleoside 5'-diphosphate + ATP = a ribonucleoside 5'-triphosphate + ADP. Major role in the synthesis of nucleoside triphosphates other than ATP. The ATP gamma phosphate is transferred to the NDP beta phosphate via a ping-pong mechanism, using a phosphorylated active-site intermediate. This chain is Nucleoside diphosphate kinase, found in Anaplasma phagocytophilum (strain HZ).